Reading from the N-terminus, the 394-residue chain is Ceramide glucosyltransferase (394 aa).

The Lumenal segment spans residues 1 to 10 (MAVLDLALQG). A helical transmembrane segment spans residues 11-32 (LAIFGCVLFFVLWFMHFLSIVY). The Cytoplasmic portion of the chain corresponds to 33–195 (TRLHLNKKVS…QVYFGTSHPR (163 aa)). Position 92 (aspartate 92) is a short sequence motif, D1. Residue aspartate 144 is a short sequence motif, D2. The helical transmembrane segment at 196-215 (SYISANVTGFKCVTGMSCLM) threads the bilayer. Residues 216–287 (RKEVLDQAGG…KLRINMLPAT (72 aa)) are Lumenal-facing. Aspartate 236 is a short sequence motif (D3). Residue aspartate 236 is the Proton acceptor of the active site. Residues 272–276 (RMIRW) carry the (Q/R)XXRW motif. The helical transmembrane segment at 288 to 304 (IICEPISECFVASLIIG) threads the bilayer. Residues 305–309 (WAAHH) are Cytoplasmic-facing. Residues 310–328 (IFRWDIMVFFMCHCLAWFI) form a helical membrane-spanning segment. The Lumenal segment spans residues 329-348 (FDYIQLRGVQGGPLNFSKLD). The chain crosses the membrane as a helical span at residues 349-369 (YAVAWFIRESMTIYIFLSALW). Residues 370–394 (DPTISWRTGRYRLRCGGTAEEILDV) are Cytoplasmic-facing.

Belongs to the glycosyltransferase 2 family.

The protein resides in the golgi apparatus membrane. It carries out the reaction an N-acylsphing-4-enine + UDP-alpha-D-glucose = a beta-D-glucosyl-(1&lt;-&gt;1')-N-acylsphing-4-enine + UDP + H(+). The enzyme catalyses UDP-alpha-D-xylose + an N-acylsphing-4-enine = a beta-D-xylosyl-(1&lt;-&gt;1')-N-acylsphing-4-enine + UDP + H(+). The catalysed reaction is N-(9Z-octadecenoyl)-sphing-4-enine + UDP-alpha-D-xylose = beta-D-xylosyl-(1&lt;-&gt;1')-N-(9Z-octadecenoyl)-sphing-4-enine + UDP + H(+). It participates in lipid metabolism; sphingolipid metabolism. Functionally, participates in the initial step of the glucosylceramide-based glycosphingolipid/GSL synthetic pathway at the cytosolic surface of the Golgi. Catalyzes the transfer of glucose from UDP-glucose to ceramide to produce glucosylceramide/GlcCer (such as beta-D-glucosyl-(1&lt;-&gt;1')-N-acylsphing-4-enine). Glucosylceramide is the core component of glycosphingolipids/GSLs, amphipathic molecules consisting of a ceramide lipid moiety embedded in the outer leaflet of the membrane, linked to one of hundreds of different externally oriented oligosaccharide structures. Glycosphingolipids are essential components of membrane microdomains that mediate membrane trafficking and signal transduction. They are implicated in many fundamental cellular processes, including growth, differentiation, migration, morphogenesis, cell-to-cell and cell-to-matrix interactions. Catalyzes the synthesis of xylosylceramide/XylCer (such as beta-D-xylosyl-(1&lt;-&gt;1')-N-acylsphing-4-enine) using UDP-Xyl as xylose donor. In Xenopus tropicalis (Western clawed frog), this protein is Ceramide glucosyltransferase (ugcg).